The chain runs to 288 residues: 2-dehydro-3-deoxyphosphooctonate aldolase (288 aa).

This sequence belongs to the KdsA family.

It is found in the cytoplasm. It catalyses the reaction D-arabinose 5-phosphate + phosphoenolpyruvate + H2O = 3-deoxy-alpha-D-manno-2-octulosonate-8-phosphate + phosphate. The protein operates within carbohydrate biosynthesis; 3-deoxy-D-manno-octulosonate biosynthesis; 3-deoxy-D-manno-octulosonate from D-ribulose 5-phosphate: step 2/3. It participates in bacterial outer membrane biogenesis; lipopolysaccharide biosynthesis. The protein is 2-dehydro-3-deoxyphosphooctonate aldolase of Syntrophobacter fumaroxidans (strain DSM 10017 / MPOB).